Here is a 636-residue protein sequence, read N- to C-terminus: Polyglycine hydrolase (636 aa).

The first 22 residues, 1–22, serve as a signal peptide directing secretion; sequence MHSLSLRRLLTSVLSLCSCSSA. N-linked (GlcNAc...) asparagine glycans are attached at residues Asn30 and Asn151. A disulfide bond links Cys141 and Cys175. The active site involves Ser363. N-linked (GlcNAc...) asparagine glycosylation is found at Asn383 and Asn481. Residues 512 to 540 are disordered; that stretch reads TEDRIVQESKNTGQDPVHPQSAKLVPGPH.

This sequence belongs to the peptidase S12 family.

The protein resides in the secreted. The catalysed reaction is a glycyl-glycyl-[protein] + H2O = N-terminal glycyl-[protein] + [protein]-C-terminal glycine. In terms of biological role, serine-type endopeptidase that cleaves Gly-Gly bonds in the polyglycine linker of host plant class IV chitinases to disrupt their chitin-binding, and thereby plays a role in lowering the defense responses of the host to the fungus. Degrades Z.mays Endochitinase A (CHIA) in vitro, although corn is not its host species. The protein is Polyglycine hydrolase of Fusarium vanettenii (strain ATCC MYA-4622 / CBS 123669 / FGSC 9596 / NRRL 45880 / 77-13-4) (Fusarium solani subsp. pisi).